The following is a 1057-amino-acid chain: Probable E3 ubiquitin-protein ligase HERC4 (1057 aa).

RCC1 repeat units lie at residues 1 to 51 (MLCW…FVLD), 52 to 101 (DGTV…ALND), 102 to 154 (KGQV…ALSK), 156 to 207 (SEVF…VLTL), 208 to 259 (SGAI…ALTK), 261 to 311 (GGVF…AFVP), and 313 to 366 (SGRI…CVKR). One can recognise an HECT domain in the interval 730-1057 (KNIDYKKPLK…IDHNEGFSLI (328 aa)). The active-site Glycyl thioester intermediate is Cys-1025.

Ubiquitously expressed, highest expression is found in testis during spermiogenesis. It is specifically found in spermatogonia, spermatocytes, and spermatids with little or no expression detectable in the spermatozoa, or interstitial cells.

The protein localises to the cytoplasm. It is found in the cytosol. It carries out the reaction S-ubiquitinyl-[E2 ubiquitin-conjugating enzyme]-L-cysteine + [acceptor protein]-L-lysine = [E2 ubiquitin-conjugating enzyme]-L-cysteine + N(6)-ubiquitinyl-[acceptor protein]-L-lysine.. Its pathway is protein modification; protein ubiquitination. Its function is as follows. Probable E3 ubiquitin-protein ligase involved in either protein trafficking or in the distribution of cellular structures. Required for spermatozoon maturation and fertility, and for the removal of the cytoplasmic droplet of the spermatozoon. E3 ubiquitin-protein ligases accept ubiquitin from an E2 ubiquitin-conjugating enzyme in the form of a thioester and then directly transfer it to targeted substrates. The sequence is that of Probable E3 ubiquitin-protein ligase HERC4 (Herc4) from Mus musculus (Mouse).